The primary structure comprises 101 residues: Small ribosomal subunit protein uS14A (101 aa).

Composition is skewed to basic and acidic residues over residues 28–44 and 61–70; these read KETIRRPSSSEDERAEA and RNRDAADGRP. Positions 28 to 74 are disordered; the sequence is KETIRRPSSSEDERAEARAALQRLPRDASPVRLRNRDAADGRPRGHL.

Belongs to the universal ribosomal protein uS14 family. In terms of assembly, part of the 30S ribosomal subunit. Contacts proteins S3 and S10.

Binds 16S rRNA, required for the assembly of 30S particles and may also be responsible for determining the conformation of the 16S rRNA at the A site. In Rhodococcus jostii (strain RHA1), this protein is Small ribosomal subunit protein uS14A.